The sequence spans 549 residues: Probable protein kinase UbiB (549 aa).

The 379-residue stretch at 123–501 folds into the Protein kinase domain; the sequence is DFDDVPLASA…QHKAHKSNYL (379 aa). ATP is bound by residues 129–137 and Lys-152; that span reads LASASIAQV. Residue Asp-287 is the Proton acceptor of the active site. 2 consecutive transmembrane segments (helical) span residues 498–517 and 521–540; these read SNYL…ILFT and TLWA…LLGW.

Belongs to the ABC1 family. UbiB subfamily.

The protein localises to the cell inner membrane. Its pathway is cofactor biosynthesis; ubiquinone biosynthesis [regulation]. In terms of biological role, is probably a protein kinase regulator of UbiI activity which is involved in aerobic coenzyme Q (ubiquinone) biosynthesis. The sequence is that of Probable protein kinase UbiB from Shewanella denitrificans (strain OS217 / ATCC BAA-1090 / DSM 15013).